Here is a 572-residue protein sequence, read N- to C-terminus: Methionine--tRNA ligase (572 aa).

The 'HIGH' region signature appears at 11–21 (PYINGIKHLGN). Zn(2+)-binding residues include cysteine 143, cysteine 146, cysteine 156, and cysteine 159. Residues 346-350 (QFSTS) carry the 'KMSKS' region motif. Residue threonine 349 participates in ATP binding.

This sequence belongs to the class-I aminoacyl-tRNA synthetase family. MetG type 1 subfamily. As to quaternary structure, monomer. It depends on Zn(2+) as a cofactor.

It localises to the cytoplasm. It carries out the reaction tRNA(Met) + L-methionine + ATP = L-methionyl-tRNA(Met) + AMP + diphosphate. Its function is as follows. Is required not only for elongation of protein synthesis but also for the initiation of all mRNA translation through initiator tRNA(fMet) aminoacylation. This Dinoroseobacter shibae (strain DSM 16493 / NCIMB 14021 / DFL 12) protein is Methionine--tRNA ligase.